The following is a 159-amino-acid chain: Gigasin-1 (159 aa).

Disordered regions lie at residues 1-33 (GKAT…HDQT) and 80-159 (KESY…KYRR).

Component of the organic matrix of calcified shell layers.

The sequence is that of Gigasin-1 from Magallana gigas (Pacific oyster).